The sequence spans 345 residues: S-adenosylmethionine:tRNA ribosyltransferase-isomerase (345 aa).

This sequence belongs to the QueA family. In terms of assembly, monomer.

It is found in the cytoplasm. It catalyses the reaction 7-aminomethyl-7-carbaguanosine(34) in tRNA + S-adenosyl-L-methionine = epoxyqueuosine(34) in tRNA + adenine + L-methionine + 2 H(+). Its pathway is tRNA modification; tRNA-queuosine biosynthesis. Transfers and isomerizes the ribose moiety from AdoMet to the 7-aminomethyl group of 7-deazaguanine (preQ1-tRNA) to give epoxyqueuosine (oQ-tRNA). This is S-adenosylmethionine:tRNA ribosyltransferase-isomerase from Acinetobacter baumannii (strain ATCC 17978 / DSM 105126 / CIP 53.77 / LMG 1025 / NCDC KC755 / 5377).